Consider the following 1501-residue polypeptide: Ribulose bisphosphate carboxylase (1501 aa).

N111 lines the substrate pocket. The active-site Proton acceptor is K166. A substrate-binding site is contributed by K168. Residues K191, D193, and E194 each contribute to the Mg(2+) site. K191 carries the post-translational modification N6-carboxylysine. H287 acts as the Proton acceptor in catalysis. Residues R288, H321, and S368 each coordinate substrate. The propeptide at 486-508 is linker; it reads SAAAFVGASVAPAKKENVVARQA. Position 619 (N619) interacts with substrate. K674 (proton acceptor) is an active-site residue. Substrate is bound at residue K676. 3 residues coordinate Mg(2+): K699, D701, and E702. An N6-carboxylysine modification is found at K699. H795 (proton acceptor) is an active-site residue. Residues R796, H829, and S876 each contribute to the substrate site. Positions 994–1016 are cleaved as a propeptide — linker; the sequence is SAAAFVGASVAPAKKENVVARQA. N1127 is a binding site for substrate. K1182 (proton acceptor) is an active-site residue. Residue K1184 coordinates substrate. Mg(2+) is bound by residues K1207, D1209, and E1210. K1207 carries the N6-carboxylysine modification. The active-site Proton acceptor is the H1303. R1304, H1337, and S1384 together coordinate substrate.

This sequence belongs to the RuBisCO large chain family. Type II subfamily. Homodimer. Mg(2+) is required as a cofactor.

The protein localises to the plastid. It localises to the chloroplast. It carries out the reaction 2 (2R)-3-phosphoglycerate + 2 H(+) = D-ribulose 1,5-bisphosphate + CO2 + H2O. The enzyme catalyses D-ribulose 1,5-bisphosphate + O2 = 2-phosphoglycolate + (2R)-3-phosphoglycerate + 2 H(+). Its function is as follows. RuBisCO catalyzes two reactions: the carboxylation of D-ribulose 1,5-bisphosphate, the primary event in carbon dioxide fixation, as well as the oxidative fragmentation of the pentose substrate. Both reactions occur simultaneously and in competition at the same active site. This is Ribulose bisphosphate carboxylase (rbcL) from Symbiodinium sp. (Dinoflagellate).